Reading from the N-terminus, the 366-residue chain is Peptide chain release factor 2 (366 aa).

Residue glutamine 251 is modified to N5-methylglutamine.

Belongs to the prokaryotic/mitochondrial release factor family. Methylated by PrmC. Methylation increases the termination efficiency of RF2.

The protein resides in the cytoplasm. In terms of biological role, peptide chain release factor 2 directs the termination of translation in response to the peptide chain termination codons UGA and UAA. This Campylobacter concisus (strain 13826) protein is Peptide chain release factor 2.